The following is a 740-amino-acid chain: Vertnin (740 aa).

Disordered stretches follow at residues 485–506 (EAGE…RGLI), 560–616 (PGMQ…DQNV), and 653–673 (TQSQ…APGG). Residues 578–604 (QKPEGRQKPEEQQKPEGRQKPEGRQKP) are compositionally biased toward basic and acidic residues. Residues 653–667 (TQSQPHSGSLPSQTL) are compositionally biased toward polar residues.

The protein belongs to the vertnin family.

The protein resides in the nucleus. Acts as a transcription factor that regulates development of thoracic vertebrae. The chain is Vertnin (Vrtn) from Mus musculus (Mouse).